A 256-amino-acid chain; its full sequence is Probable cyclic nucleotide phosphodiesterase Fisuc_1441/FSU_1912 (256 aa).

Residues aspartate 20, histidine 22, aspartate 59, asparagine 89, histidine 156, histidine 196, and histidine 198 each coordinate Fe cation. AMP contacts are provided by residues histidine 22, aspartate 59, and 89–90 (NH). Histidine 198 is an AMP binding site.

This sequence belongs to the cyclic nucleotide phosphodiesterase class-III family. Fe(2+) serves as cofactor.

This is Probable cyclic nucleotide phosphodiesterase Fisuc_1441/FSU_1912 from Fibrobacter succinogenes (strain ATCC 19169 / S85).